A 1068-amino-acid polypeptide reads, in one-letter code: Disheveled-associated activator of morphogenesis 2 (1068 aa).

Residues 40 to 416 form the GBD/FH3 domain; the sequence is SPIPNAEELN…QIVLQDERGV (377 aa). Residues 434–516 are a coiled coil; sequence MLINENEVKQ…LVAQLSELST (83 aa). Positions 514–586 are disordered; it reads LSTGPVSSPP…MGLPLPQDPY (73 aa). Residues 518-594 form the FH1 domain; that stretch reads PVSSPPPPGG…PYPSSDVPLR (77 aa). The segment covering 540-572 has biased composition (pro residues); it reads LPPPPPPLPFACCPPPPPPPLPPGGPPTPPGAP. Positions 595-994 constitute an FH2 domain; the sequence is KKRVPQPSHP…EERRARMEAM (400 aa). A Phosphoserine modification is found at S1015. A DAD domain is found at 1016–1048; it reads SLEEGGEFDDLVSALRSGEVFDKDLCKLKRSRK.

Belongs to the formin homology family. Interacts with DVL3. Interacts with INF2. As to expression, expressed in most tissues examined. Expressed in kidney glomeruli.

Its function is as follows. Key regulator of the Wnt signaling pathway, which is required for various processes during development, such as dorsal patterning, determination of left/right symmetry or myelination in the central nervous system. Acts downstream of Wnt ligands and upstream of beta-catenin (CTNNB1). Required for canonical Wnt signaling pathway during patterning in the dorsal spinal cord by promoting the aggregation of Disheveled (Dvl) complexes, thereby clustering and formation of Wnt receptor signalosomes and potentiating Wnt activity. During dorsal patterning of the spinal cord, inhibits oligodendrocytes differentiation via interaction with PIP5K1A. Also regulates non-canonical Wnt signaling pathway. Acts downstream of PITX2 in the developing gut and is required for left/right asymmetry within dorsal mesentery: affects mesenchymal condensation by lengthening cadherin-based junctions through WNT5A and non-canonical Wnt signaling, inducing polarized condensation in the left dorsal mesentery necessary to initiate gut rotation. Together with DAAM1, required for myocardial maturation and sarcomere assembly. Is a regulator of actin nucleation and elongation, filopodia formation and podocyte migration. In Homo sapiens (Human), this protein is Disheveled-associated activator of morphogenesis 2.